The following is a 79-amino-acid chain: Adipokinetic hormone (79 aa).

The signal sequence occupies residues Met-1–Cys-22. Position 23 is a pyrrolidone carboxylic acid (Gln-23). Residue Trp-30 is modified to Tryptophan amide. A propeptide spanning residues Ser-34–Glu-79 is cleaved from the precursor.

This sequence belongs to the AKH/HRTH/RPCH family.

Its subcellular location is the secreted. Functionally, probably causes a marked increase in hemolymph carbohydrate. The chain is Adipokinetic hormone (Akh) from Drosophila melanogaster (Fruit fly).